The chain runs to 103 residues: Histone H4 (103 aa).

Residues 1–14 (MSGRGKGGKGLGKG) are compositionally biased toward gly residues. Residues 1–20 (MSGRGKGGKGLGKGGAKRHR) form a disordered region. Residues 17-21 (KRHRK) mediate DNA binding.

Belongs to the histone H4 family. As to quaternary structure, the nucleosome is a histone octamer containing two molecules each of H2A, H2B, H3 and H4 assembled in one H3-H4 heterotetramer and two H2A-H2B heterodimers. The octamer wraps approximately 147 bp of DNA.

It localises to the nucleus. Its subcellular location is the chromosome. Core component of nucleosome. Nucleosomes wrap and compact DNA into chromatin, limiting DNA accessibility to the cellular machineries which require DNA as a template. Histones thereby play a central role in transcription regulation, DNA repair, DNA replication and chromosomal stability. DNA accessibility is regulated via a complex set of post-translational modifications of histones, also called histone code, and nucleosome remodeling. The protein is Histone H4 (H4-I) of Volvox carteri (Green alga).